Reading from the N-terminus, the 1062-residue chain is 3-hydroxy-3-methylglutaryl-coenzyme A reductase 2 (1062 aa).

Residues 1–34 (MAPTNTKDSDTPGWLHRHGTSVLGSVARQACKQP) are Cytoplasmic-facing. A helical transmembrane segment spans residues 35-55 (IYTLVITALLATMTYTSLLEG). The Lumenal portion of the chain corresponds to 56-230 (SLYNANLTRL…SFVGLIKHAQ (175 aa)). Residue Asn-61 is glycosylated (N-linked (GlcNAc...) asparagine). The chain crosses the membrane as a helical span at residues 231–251 (IIDIIIMLLAYLAMHLTFLSL). Residues 233-403 (DIIIMLLAYL…FTFYISVLCV (171 aa)) enclose the SSD domain. The Cytoplasmic portion of the chain corresponds to 252-261 (FMSMRQLGSR). Residues 262–282 (FWLAYSVLLSGFFSLFFGLKV) traverse the membrane as a helical segment. Topologically, residues 283–287 (TTSSG) are lumenal. The helical transmembrane segment at 288–308 (VSTSMITLSECLPILVIIVGF) threads the bilayer. At 309-355 (EKPIRLTRAVLRAATESYLPAKPMARRSTPEAIEVAIMREGWRIVRD) the chain is on the cytoplasmic side. Residues 356 to 375 (YAIEIAILAAGATSRVQGAL) form a helical membrane-spanning segment. Over 376–377 (PQ) the chain is Lumenal. A helical transmembrane segment spans residues 378–398 (FCFLAAWILLFDSLLLFTFYI). At 399-450 (SVLCVKLEITRIRKHVEPRRALEDDDISTGNQDFDSRVFGCKVKAANISRFK) the chain is on the cytoplasmic side. The helical transmembrane segment at 451 to 471 (FLMVGGFVLFNVLQLSSLTYG) threads the bilayer. Residues 472–564 (NVRVSDWMPY…GCVLAWLEDP (93 aa)) are Lumenal-facing. A glycan (N-linked (GlcNAc...) asparagine) is linked at Asn-484. Residues 565 to 585 (VISKWVIAALFLSLVLNSYLM) traverse the membrane as a helical segment. Topologically, residues 586 to 1062 (KAARWNLRQS…NRSKVAAKTG (477 aa)) are cytoplasmic. Glu-744 (charge relay system) is an active-site residue. CoA is bound at residue 750–756 (SASRGCK). NADP(+) contacts are provided by residues 811 to 813 (SRF) and 838 to 846 (DAMGMNMIS). Lys-877 serves as the catalytic Charge relay system. A CoA-binding site is contributed by 906–908 (VLK). Asp-953 serves as the catalytic Charge relay system. 1048–1049 (AH) lines the CoA pocket. His-1049 (proton donor) is an active-site residue. 1053–1054 (NR) contacts NADP(+).

This sequence belongs to the HMG-CoA reductase family.

It localises to the endoplasmic reticulum membrane. The catalysed reaction is (R)-mevalonate + 2 NADP(+) + CoA = (3S)-3-hydroxy-3-methylglutaryl-CoA + 2 NADPH + 2 H(+). It participates in metabolic intermediate biosynthesis; (R)-mevalonate biosynthesis; (R)-mevalonate from acetyl-CoA: step 3/3. HMG-CoA reductase; part of the first module of ergosterol biosynthesis pathway that includes the early steps of the pathway, conserved across all eukaryotes, and which results in the formation of mevalonate from acetyl-coenzyme A (acetyl-CoA). Hmg1 and hmg2 catalyze the reduction of hydroxymethylglutaryl-CoA (HMG-CoA) to mevalonate. The first module starts with the action of the cytosolic acetyl-CoA acetyltransferase erg10B that catalyzes the formation of acetoacetyl-CoA. The hydroxymethylglutaryl-CoA synthases erg13A and erg13B then condense acetyl-CoA with acetoacetyl-CoA to form HMG-CoA. The rate-limiting step of the early module is the reduction to mevalonate by the 3-hydroxy-3-methylglutaryl-coenzyme A (HMG-CoA) reductases hmg1 and hmg2. Mevalonate is also a precursor for the extracellular siderophore triacetylfusarinine C (TAFC). The protein is 3-hydroxy-3-methylglutaryl-coenzyme A reductase 2 of Aspergillus fumigatus (strain ATCC MYA-4609 / CBS 101355 / FGSC A1100 / Af293) (Neosartorya fumigata).